A 218-amino-acid chain; its full sequence is DNA ADP-ribosyl transferase (218 aa).

Residues 14-217 form the DarT domain; that stretch reads ALIWRIVHRD…SVHTRSGWYF (204 aa). Residues 18–20 and R57 contribute to the NAD(+) site; that span reads RIV. An NAD(+)-binding element region spans residues 41 to 59; it reads QAENWINIGNPELIGKRAG. The active-site Proton acceptor is R57. The ADP-ribosylating turn-turn loop stretch occupies residues 123–170; sequence TDSHAYYNWTNYYTSLNSLDQIDWPILQARDFRRDPDDPAKFERYQAE. Residue E170 is part of the active site.

The protein belongs to the DarT ADP-ribosyltransferase family. As to quaternary structure, interacts with cognate antitoxin DarG (via C-terminus); this heterodimeric complex neutralizes the toxic effect of DarT by preventing ssDNA binding to DarT and consequently inactivating the toxin by direct protein-protein interactions.

It catalyses the reaction a thymidine in DNA + NAD(+) = an N-(ADP-alpha-D-ribosyl)-thymidine in DNA + nicotinamide + H(+). Functionally, toxic component of the hybrid type II/IV toxin-antitoxin (TA) system DarTG, which plays a crucial role in controlling bacterial growth and bacteriophage infection. ADP-ribosylates ssDNA in the sequence TTT/TCT. In case of phage infection, DarT toxin ADP-ribosylates DNA, which inhibits both viral DNA and RNA synthesis and leads to abortive infection. Its toxic effect is neutralized by cognate antitoxin DarG. May target ssDNA loops during DNA replication, probably modifies thymidine. Wild-type protein cannot be expressed at low levels in the absence of its cognate antitoxin, but a mutant protein (G49D) can be expressed, which slows growth, rapidly inhibits DNA replication, and induces RecA expression and the SOS response. The slow growth phenotype can be suppressed by cognate antitoxin DarG. Has no activity on dsDNA in vitro. In vivo ADP-ribosylates genomic DNA (gDNA). Genetic data strongly suggests ADP-ribosylation by DarT probably generates ssDNA gaps that are repaired by the RecFOR-mediated homologous recombination pathway (RuvAB, RecG) and resolved by RuvC. In some cases these gaps probably migrate into dsDNA, where they are resolved by nucleotide excision repair (NER) detected by UvrAB, excised by UvrC, removed by UvrD, and repaired by Pol I and ligase. Other pathways may also be involved in ADP-ribosylation removal from DNA. The chain is DNA ADP-ribosyl transferase from Escherichia coli O127:H6 (strain E2348/69 / EPEC).